The primary structure comprises 283 residues: Non-selective voltage-gated ion channel VDAC3 (283 aa).

Cys-2 bears the N-acetylcysteine mark. Thr-4 is modified (phosphothreonine). 3 positions are modified to N6-acetyllysine: Lys-12, Lys-15, and Lys-20. A run of 2 beta stranded transmembrane segments spans residues 26–35 (MVKIDLKTKS) and 39–47 (VEFSTSGHA). Residues Lys-53 and Lys-61 each participate in a glycyl lysine isopeptide (Lys-Gly) (interchain with G-Cter in ubiquitin) cross-link. 3 consecutive transmembrane segments (beta stranded) span residues 54–64 (ASGNLETKYKV), 69–76 (LTFTQKWN), and 80–89 (TLGTEISWEN). Residue Lys-90 is modified to N6-acetyllysine. Residues 95–104 (LKLTLDTIFV) form a beta stranded membrane-spanning segment. Residues Lys-109 and Lys-110 each participate in a glycyl lysine isopeptide (Lys-Gly) (interchain with G-Cter in ubiquitin) cross-link. The next 10 membrane-spanning stretches (beta stranded) occupy residues 111-120 (SGKLKASYKR), 123-130 (FSVGSNVD), 137-145 (TIYGWAVLA), 150-158 (LAGYQMSFD), 163-175 (KLSQ…GYKA), 178-185 (FQLHTHVN), 189-198 (EFGGSIYQKV), 202-211 (IETSINLAWT), 218-227 (RFGIAAKYML), and 231-238 (TSLSAKVN). Lys-163 is covalently cross-linked (Glycyl lysine isopeptide (Lys-Gly) (interchain with G-Cter in ubiquitin)). The residue at position 241 (Ser-241) is a Phosphoserine. NAD(+) is bound by residues 242–244 (LIG) and 260–264 (SALID). The next 2 membrane-spanning stretches (beta stranded) occupy residues 242 to 251 (LIGLGYTQTL) and 254 to 263 (GVKLTLSALI). N6-acetyllysine; alternate is present on Lys-266. A Glycyl lysine isopeptide (Lys-Gly) (interchain with G-Cter in ubiquitin); alternate cross-link involves residue Lys-266. A beta stranded membrane pass occupies residues 273–282 (HKVGLGFELE). Residue Lys-274 forms a Glycyl lysine isopeptide (Lys-Gly) (interchain with G-Cter in ubiquitin) linkage.

The protein belongs to the eukaryotic mitochondrial porin family. As to quaternary structure, interacts with ARMC12 in a TBC1D21-dependent manner. Interacts with MISFA. In terms of processing, ubiquitinated by PRKN during mitophagy, leading to its degradation and enhancement of mitophagy. Deubiquitinated by USP30. Expressed in erythrocytes (at protein level). Widely expressed. Highest in testis.

It is found in the mitochondrion outer membrane. The protein resides in the membrane. It carries out the reaction chloride(in) = chloride(out). The enzyme catalyses K(+)(in) = K(+)(out). Functionally, non-selective voltage-gated ion channel that mediates the transport of anions and cations through the mitochondrion outer membrane and plasma membrane. Forms a high-conducting channel with a stable open state and a voltage-induced closure with a mild preference for anions over cations. Involved in male fertility and sperm mitochondrial sheath formation. This chain is Non-selective voltage-gated ion channel VDAC3, found in Homo sapiens (Human).